Reading from the N-terminus, the 37-residue chain is Photosystem II reaction center protein Y (37 aa).

The chain crosses the membrane as a helical span at residues 4 to 22 (AIVVFAPIIAAVAWVVFNI).

The protein belongs to the PsbY family. PSII is composed of 1 copy each of membrane proteins PsbA, PsbB, PsbC, PsbD, PsbE, PsbF, PsbH, PsbI, PsbJ, PsbK, PsbL, PsbM, PsbT, PsbX, PsbY, Psb30/Ycf12, peripheral proteins PsbO, CyanoQ (PsbQ), PsbU, PsbV and a large number of cofactors. It forms dimeric complexes.

The protein localises to the cellular thylakoid membrane. Functionally, loosely associated component of the core of photosystem II (PSII), it is not always seen in crystals. PSII is a light-driven water plastoquinone oxidoreductase, using light energy to abstract electrons from H(2)O, generating a proton gradient subsequently used for ATP formation. This Prochlorococcus marinus (strain MIT 9312) protein is Photosystem II reaction center protein Y.